The sequence spans 282 residues: Bis(5'-nucleosyl)-tetraphosphatase, symmetrical (282 aa).

The protein belongs to the Ap4A hydrolase family.

The enzyme catalyses P(1),P(4)-bis(5'-adenosyl) tetraphosphate + H2O = 2 ADP + 2 H(+). Functionally, hydrolyzes diadenosine 5',5'''-P1,P4-tetraphosphate to yield ADP. The polypeptide is Bis(5'-nucleosyl)-tetraphosphatase, symmetrical (Escherichia coli O127:H6 (strain E2348/69 / EPEC)).